A 160-amino-acid chain; its full sequence is SsrA-binding protein (160 aa).

Residues 131–160 form a disordered region; sequence KKEYDKRHTERERDSDRELQRAVRTKGKED.

It belongs to the SmpB family.

It localises to the cytoplasm. Required for rescue of stalled ribosomes mediated by trans-translation. Binds to transfer-messenger RNA (tmRNA), required for stable association of tmRNA with ribosomes. tmRNA and SmpB together mimic tRNA shape, replacing the anticodon stem-loop with SmpB. tmRNA is encoded by the ssrA gene; the 2 termini fold to resemble tRNA(Ala) and it encodes a 'tag peptide', a short internal open reading frame. During trans-translation Ala-aminoacylated tmRNA acts like a tRNA, entering the A-site of stalled ribosomes, displacing the stalled mRNA. The ribosome then switches to translate the ORF on the tmRNA; the nascent peptide is terminated with the 'tag peptide' encoded by the tmRNA and targeted for degradation. The ribosome is freed to recommence translation, which seems to be the essential function of trans-translation. The polypeptide is SsrA-binding protein (Pseudomonas fluorescens (strain ATCC BAA-477 / NRRL B-23932 / Pf-5)).